The following is a 25-amino-acid chain: Small ribosomal subunit protein eS32 (25 aa).

A disordered region spans residues 1 to 25 (MRAKWRKKRMRRLKRKRRKMRARSK).

Belongs to the eukaryotic ribosomal protein eS32 family. In terms of assembly, component of the small ribosomal subunit.

This Spodoptera frugiperda (Fall armyworm) protein is Small ribosomal subunit protein eS32 (RpL41).